The sequence spans 346 residues: UDP-3-O-acylglucosamine N-acyltransferase (346 aa).

Histidine 253 (proton acceptor) is an active-site residue.

Belongs to the transferase hexapeptide repeat family. LpxD subfamily. In terms of assembly, homotrimer.

It catalyses the reaction a UDP-3-O-[(3R)-3-hydroxyacyl]-alpha-D-glucosamine + a (3R)-hydroxyacyl-[ACP] = a UDP-2-N,3-O-bis[(3R)-3-hydroxyacyl]-alpha-D-glucosamine + holo-[ACP] + H(+). Its pathway is bacterial outer membrane biogenesis; LPS lipid A biosynthesis. Its function is as follows. Catalyzes the N-acylation of UDP-3-O-acylglucosamine using 3-hydroxyacyl-ACP as the acyl donor. Is involved in the biosynthesis of lipid A, a phosphorylated glycolipid that anchors the lipopolysaccharide to the outer membrane of the cell. The protein is UDP-3-O-acylglucosamine N-acyltransferase of Rickettsia felis (strain ATCC VR-1525 / URRWXCal2) (Rickettsia azadi).